The chain runs to 149 residues: Cytochrome c-555 (149 aa).

The first 20 residues, 1 to 20, serve as a signal peptide directing secretion; it reads MKRTMIVVTTLLLGAGAVMA. Positions 32, 137, 140, and 141 each coordinate heme c.

Monomer. Post-translationally, binds 1 heme c group covalently per subunit.

It is found in the periplasm. Its function is as follows. Low-spin monoheme cytochrome. This Bradyrhizobium diazoefficiens (strain JCM 10833 / BCRC 13528 / IAM 13628 / NBRC 14792 / USDA 110) protein is Cytochrome c-555 (cycC).